A 49-amino-acid polypeptide reads, in one-letter code: Large ribosomal subunit protein bL33C (49 aa).

The protein belongs to the bacterial ribosomal protein bL33 family.

The polypeptide is Large ribosomal subunit protein bL33C (Bacillus pumilus (strain SAFR-032)).